The following is a 463-amino-acid chain: MTKPFSVVLASLLAITSTISPLASAQQSQPLDRIAAIVDEDVVLQSELDRAVRNVKSQYAGRENQLPPDDVLQRQVLERLILVKLQVGRADGSGIRVSDEELNRAIASIAQQNGTTVDGLRQKLAADGMGYADFRASVRDEIIVQRLRQSFAQSRISVSEGEVDTALTQQAATGSKYHLAHILIGLPEGATAEQIATGQKKVDGVKTLIDKGELDFPAAAVRYSDSPNALEGGDLGWRSLDEIPNAFAQLIRDMKPGQVAGPLRGPSGFQLLKLMEMRDANAGGEKKMVTEYNARHILVRVGDNQTEAQAKAKIDTIRARIVGGADFQATAKESSEDTNSRGQGGDLGWFPADAFGPDFGKQVEGLADGAVSEPFRTQAGWHIVQRVGSRQTDVSAENQRAQVRETIGRRKLEEEYNRYLQELRGEAYVSYRTGDRADNNATAAPAKSADPALPAPPPAKPTR.

Residues 1 to 25 form the signal peptide; the sequence is MTKPFSVVLASLLAITSTISPLASA. 2 PpiC domains span residues 174 to 276 and 289 to 388; these read GSKY…KLME and VTEY…QRVG. 2 disordered regions span residues 329–348 and 434–463; these read ATAK…GDLG and GDRA…KPTR. Positions 439 to 452 are enriched in low complexity; the sequence is NNATAAPAKSADPA. Residues 453–463 are compositionally biased toward pro residues; sequence LPAPPPAKPTR.

It is found in the periplasm. It catalyses the reaction [protein]-peptidylproline (omega=180) = [protein]-peptidylproline (omega=0). In terms of biological role, chaperone involved in the correct folding and assembly of outer membrane proteins. Recognizes specific patterns of aromatic residues and the orientation of their side chains, which are found more frequently in integral outer membrane proteins. May act in both early periplasmic and late outer membrane-associated steps of protein maturation. The chain is Chaperone SurA from Xanthomonas oryzae pv. oryzae (strain MAFF 311018).